Consider the following 117-residue polypeptide: Large ribosomal subunit protein bL17 (117 aa).

It belongs to the bacterial ribosomal protein bL17 family. As to quaternary structure, part of the 50S ribosomal subunit. Contacts protein L32.

In Exiguobacterium sp. (strain ATCC BAA-1283 / AT1b), this protein is Large ribosomal subunit protein bL17.